Consider the following 416-residue polypeptide: Type II methyltransferase M.PspPI (416 aa).

The SAM-dependent MTase C5-type domain maps to 77 to 410; the sequence is YSLVELFAGA…KAIIRMLNAA (334 aa). C149 is a catalytic residue.

This sequence belongs to the class I-like SAM-binding methyltransferase superfamily. C5-methyltransferase family.

The enzyme catalyses a 2'-deoxycytidine in DNA + S-adenosyl-L-methionine = a 5-methyl-2'-deoxycytidine in DNA + S-adenosyl-L-homocysteine + H(+). A methylase, recognizes the double-stranded sequence 5'-GGNCC-3', methylates C-4 on both strands, and protects the DNA from cleavage by the PspPI endonuclease. The sequence is that of Type II methyltransferase M.PspPI from Psychrobacter sp. (strain TA137).